A 181-amino-acid chain; its full sequence is Nucleoside triphosphate/diphosphate phosphatase (181 aa).

Catalysis depends on Arg26, which acts as the Proton donor. Asn90, Asp106, Asp108, Asp110, Asp123, and Glu126 together coordinate Mg(2+).

The protein belongs to the Ntdp family. Mg(2+) is required as a cofactor.

The catalysed reaction is a ribonucleoside 5'-triphosphate + H2O = a ribonucleoside 5'-diphosphate + phosphate + H(+). It catalyses the reaction a ribonucleoside 5'-diphosphate + H2O = a ribonucleoside 5'-phosphate + phosphate + H(+). Functionally, has nucleoside phosphatase activity towards nucleoside triphosphates and nucleoside diphosphates. This Ligilactobacillus salivarius (strain UCC118) (Lactobacillus salivarius) protein is Nucleoside triphosphate/diphosphate phosphatase.